The sequence spans 615 residues: ATP-dependent zinc metalloprotease FtsH 2 (615 aa).

Residues 1-7 (MNEPNRN) are Cytoplasmic-facing. The chain crosses the membrane as a helical span at residues 8–28 (FFWIFFLILGIFWLQSVWFGS). The Periplasmic segment spans residues 29-99 (RTVQQIPYSQ…VTYRREIENT (71 aa)). The helical transmembrane segment at 100 to 120 (FFRDLLSWVVPALIFVAVFLY) threads the bilayer. The Cytoplasmic portion of the chain corresponds to 121-615 (FSRKFAEKGG…APQRERDLSV (495 aa)). 195-202 (GPPGTGKT) serves as a coordination point for ATP. Histidine 418 provides a ligand contact to Zn(2+). Glutamate 419 is a catalytic residue. Zn(2+) contacts are provided by histidine 422 and aspartate 495.

It in the central section; belongs to the AAA ATPase family. The protein in the C-terminal section; belongs to the peptidase M41 family. In terms of assembly, homohexamer. Zn(2+) is required as a cofactor.

It localises to the cell inner membrane. Functionally, acts as a processive, ATP-dependent zinc metallopeptidase for both cytoplasmic and membrane proteins. Plays a role in the quality control of integral membrane proteins. The chain is ATP-dependent zinc metalloprotease FtsH 2 from Bdellovibrio bacteriovorus (strain ATCC 15356 / DSM 50701 / NCIMB 9529 / HD100).